Reading from the N-terminus, the 348-residue chain is L-threonine 3-dehydrogenase (348 aa).

Cys42 lines the Zn(2+) pocket. Catalysis depends on charge relay system residues Thr44 and His47. The Zn(2+) site is built by His67, Glu68, Cys97, Cys100, Cys103, and Cys111. NAD(+) is bound by residues Leu179, Glu199, Arg204, 266–268, and 291–292; these read LGL and IT.

This sequence belongs to the zinc-containing alcohol dehydrogenase family. As to quaternary structure, homodimer. Homotetramer; dimer of dimers. It depends on Zn(2+) as a cofactor.

It localises to the cytoplasm. The enzyme catalyses L-threonine + NAD(+) = (2S)-2-amino-3-oxobutanoate + NADH + H(+). It functions in the pathway amino-acid degradation; L-threonine degradation via oxydo-reductase pathway; glycine from L-threonine: step 1/2. Its activity is regulated as follows. Is totally inhibited by EDTA in vitro. Its function is as follows. Catalyzes the NAD(+)-dependent oxidation of L-threonine to 2-amino-3-ketobutyrate. Is much less efficient when using NADP(+) instead of NAD(+). To a lesser extent, also catalyzes the oxidation of L-serine and DL-threo-3-phenylserine, but not that of L-allo-threonine, D-threonine and D-allo-threonine and many other L-amino acids. This is L-threonine 3-dehydrogenase from Pyrococcus horikoshii (strain ATCC 700860 / DSM 12428 / JCM 9974 / NBRC 100139 / OT-3).